The sequence spans 467 residues: MDTAGIRLTPKEIVSKLNEYIVGQNDAKRKVAIALRNRYRRSLLDEESKQEISPKNILMIGPTGVGKTEIARRMAKVVGAPFIKVEATKFTEVGYVGRDVESMVRDLVDVSVRLVKAQKKSLVQDEATAKANEKLVKLLVPSMKKKASQTNNPLESLFGGAIPNFGQNNEDEEEPPTEEIKTKRSEIKRQLEEGKLEKEKVRIKVEQDPGALGMLGTNQNQQMQEMMNQLMPKKKVEREVAVETARKILADSYADELIDQESANQEALELAEQMGIIFIDEIDKVATNNHNSGQDVSRQGVQRDILPILEGSVIQTKYGTVNTEHMLFIGAGAFHVSKPSDLIPELQGRFPIRVELDSLAVEDFVRILTEPKLSLIKQYEALLQTEEVTVNFTDEAITRLAEIAYQVNQDTDNIGARRLHTILEKMLEDLSFEAPSMPNAVVDITPQYVDDKLKSISTNKDLSAFIL.

Residues V22 and 64–69 (GVGKTE) contribute to the ATP site. The segment at 149–192 (QTNNPLESLFGGAIPNFGQNNEDEEEPPTEEIKTKRSEIKRQLE) is disordered. Over residues 178–192 (EEIKTKRSEIKRQLE) the composition is skewed to basic and acidic residues. Residues D280, E345, and R417 each coordinate ATP.

The protein belongs to the ClpX chaperone family. HslU subfamily. A double ring-shaped homohexamer of HslV is capped on each side by a ring-shaped HslU homohexamer. The assembly of the HslU/HslV complex is dependent on binding of ATP.

The protein localises to the cytoplasm. ATPase subunit of a proteasome-like degradation complex; this subunit has chaperone activity. The binding of ATP and its subsequent hydrolysis by HslU are essential for unfolding of protein substrates subsequently hydrolyzed by HslV. HslU recognizes the N-terminal part of its protein substrates and unfolds these before they are guided to HslV for hydrolysis. The chain is ATP-dependent protease ATPase subunit HslU from Staphylococcus aureus (strain MRSA252).